A 964-amino-acid chain; its full sequence is Probable LRR receptor-like serine/threonine-protein kinase IRK (964 aa).

A signal peptide spans 1-20 (MYKALIFTVLLVSAVAPVRS). Residues 21–603 (LDPPLNDDVL…GHKRILLSIS (583 aa)) lie on the Extracellular side of the membrane. LRR repeat units follow at residues 92–116 (LQFL…MLLS), 117–141 (LVNL…FFRQ), 143–166 (GSLR…ISSC), 168–190 (SLAA…IWSL), 191–214 (NTLR…IDRL), 215–238 (NNLR…IGSC), 240–261 (LLKT…TFQQ), 263–286 (SLCY…IGEM), 287–310 (RSLE…IGNL), 312–334 (ALKV…TANC), and 335–358 (INLL…LFQD). A glycan (N-linked (GlcNAc...) asparagine) is linked at Asn-104. A glycan (N-linked (GlcNAc...) asparagine) is linked at Asn-173. N-linked (GlcNAc...) asparagine glycosylation is present at Asn-317. N-linked (GlcNAc...) asparagine glycosylation occurs at Asn-370. LRR repeat units follow at residues 375–399 (IKKI…LGDL), 400–423 (RDLE…IGEL), 425–447 (HLSV…TGGA), 448–471 (VSLE…IKNC), 472–495 (SSLR…LAKL), 496–519 (TRLE…LANL), and 521–544 (YLHT…IFNG). N-linked (GlcNAc...) asparagine glycosylation occurs at Asn-470. N-linked (GlcNAc...) asparagine glycans are attached at residues Asn-526, Asn-562, and Asn-578. Residues 604–624 (SLIAISAAAAIVVGVIAITVL) traverse the membrane as a helical segment. Over 625–964 (NLRVRASTVS…SGSSDELGSS (340 aa)) the chain is Cytoplasmic. The region spanning 678 to 951 (LNKDCELGRG…GEAVNILRMI (274 aa)) is the Protein kinase domain. Residues 684 to 692 (LGRGGFGAV) and Lys-706 each bind ATP.

Belongs to the protein kinase superfamily. Ser/Thr protein kinase family. In terms of assembly, interacts with IRKI. In terms of processing, autophosphorylated. In terms of tissue distribution, highly expressed in root tips, shoot apices and developing flowers.

It is found in the cell membrane. The enzyme catalyses L-seryl-[protein] + ATP = O-phospho-L-seryl-[protein] + ADP + H(+). It catalyses the reaction L-threonyl-[protein] + ATP = O-phospho-L-threonyl-[protein] + ADP + H(+). This Arabidopsis thaliana (Mouse-ear cress) protein is Probable LRR receptor-like serine/threonine-protein kinase IRK.